A 249-amino-acid chain; its full sequence is 2,3-bisphosphoglycerate-dependent phosphoglycerate mutase (249 aa).

Residues 11-18, 24-25, R63, 90-93, K101, 117-118, and 185-186 contribute to the substrate site; these read RHGNSEWN, TG, ERHY, RR, and GN. H12 functions as the Tele-phosphohistidine intermediate in the catalytic mechanism. The Proton donor/acceptor role is filled by E90.

It belongs to the phosphoglycerate mutase family. BPG-dependent PGAM subfamily.

The catalysed reaction is (2R)-2-phosphoglycerate = (2R)-3-phosphoglycerate. It participates in carbohydrate degradation; glycolysis; pyruvate from D-glyceraldehyde 3-phosphate: step 3/5. In terms of biological role, catalyzes the interconversion of 2-phosphoglycerate and 3-phosphoglycerate. This is 2,3-bisphosphoglycerate-dependent phosphoglycerate mutase from Leifsonia xyli subsp. xyli (strain CTCB07).